Reading from the N-terminus, the 276-residue chain is Formamidopyrimidine-DNA glycosylase (276 aa).

Pro2 (schiff-base intermediate with DNA) is an active-site residue. Glu3 serves as the catalytic Proton donor. Lys58 (proton donor; for beta-elimination activity) is an active-site residue. DNA is bound by residues His94, Arg112, and Arg157. The FPG-type zinc finger occupies 242–276; that stretch reads FVYDRAGLPCRVCGTPIKQIVQGQRSTYFCPTCQR. Catalysis depends on Arg266, which acts as the Proton donor; for delta-elimination activity.

This sequence belongs to the FPG family. Monomer. Zn(2+) is required as a cofactor.

It catalyses the reaction Hydrolysis of DNA containing ring-opened 7-methylguanine residues, releasing 2,6-diamino-4-hydroxy-5-(N-methyl)formamidopyrimidine.. The enzyme catalyses 2'-deoxyribonucleotide-(2'-deoxyribose 5'-phosphate)-2'-deoxyribonucleotide-DNA = a 3'-end 2'-deoxyribonucleotide-(2,3-dehydro-2,3-deoxyribose 5'-phosphate)-DNA + a 5'-end 5'-phospho-2'-deoxyribonucleoside-DNA + H(+). Functionally, involved in base excision repair of DNA damaged by oxidation or by mutagenic agents. Acts as a DNA glycosylase that recognizes and removes damaged bases. Has a preference for oxidized purines, such as 7,8-dihydro-8-oxoguanine (8-oxoG). Has AP (apurinic/apyrimidinic) lyase activity and introduces nicks in the DNA strand. Cleaves the DNA backbone by beta-delta elimination to generate a single-strand break at the site of the removed base with both 3'- and 5'-phosphates. This Paraburkholderia xenovorans (strain LB400) protein is Formamidopyrimidine-DNA glycosylase.